Reading from the N-terminus, the 408-residue chain is Glutamate N-acetyltransferase (408 aa).

Positions 150, 176, 189, 271, 403, and 408 each coordinate substrate. Residue Thr189 is the Nucleophile of the active site.

The protein belongs to the ArgJ family. Heterotetramer of two alpha and two beta chains.

It localises to the cytoplasm. The enzyme catalyses N(2)-acetyl-L-ornithine + L-glutamate = N-acetyl-L-glutamate + L-ornithine. Its pathway is amino-acid biosynthesis; L-arginine biosynthesis; L-ornithine and N-acetyl-L-glutamate from L-glutamate and N(2)-acetyl-L-ornithine (cyclic): step 1/1. In terms of biological role, catalyzes the transfer of the acetyl group from N(2)-acetylornithine to glutamate, forming N-acetylglutamate and L-ornithine. The protein is Glutamate N-acetyltransferase of Methanococcus maripaludis (strain C5 / ATCC BAA-1333).